The following is a 412-amino-acid chain: Divalent metal cation transporter MntH (412 aa).

Transmembrane regions (helical) follow at residues 19-39 (FALM…GNFA), 46-66 (ASFG…AMLI), 94-114 (VWFY…AEFI), 122-142 (LILG…TFLI), 155-175 (LVIG…LVFS), 196-216 (AVFL…IYLH), 241-261 (IAMT…AAAF), 290-310 (IFGL…TLAG), 329-349 (SVTM…TRIL), 350-370 (VMSQ…LLIF), and 389-409 (IGWM…IGTL).

It belongs to the NRAMP family.

The protein resides in the cell inner membrane. In terms of biological role, h(+)-stimulated, divalent metal cation uptake system. This is Divalent metal cation transporter MntH from Enterobacter sp. (strain 638).